Consider the following 558-residue polypeptide: MAMSLKKIGAIAVGGAMVATALASGVAAEVTTSGFSDYKELKDILVKDGQPNCYVVVGADAPSTMDVVSAADIAAKIGSLCYKEGTVEDGSADITVHAEANSDDFDLKKDWNNSAMPANAYALFVAASDGDYSEKFENDTGKPSFMDNGVLGDADKINKTVDLGDIATMMKVDDVDPSDWYDSDDDAGEIVMVELKNDTSDGFTVYKKNMLYETLVYKDDEENFANTTKMEEGMRIPFLGKEMVVVDIDKDDDAIYLGTPVYDGIIKEGETYDLGNGYQVKIKAILKTTVNNTDVYKVDVQILKDGKVVAEKYDKAPLELEYKDDVGVTVHKAWENVGGDYGYAELVISKDLKKLELDEEYVTDWKAYAVLNDNGTMKLEDDLNDNNVDKVVGIALRYDGDKLDDLDSGDEVDILDYVKFKLDDEDSNDKLKVYFSMDKDVDATLNIGEKVKALNAEVKLKDIKANAVEPVSLTAPIAKLDTEVSLDTADKNLVLVGGPVANKLTKELVDAGKLALDNNSPATIALIPDAANGHDVIVVAGGDREKTREAALELIKNL.

An N-terminal signal peptide occupies residues 1-28 (MAMSLKKIGAIAVGGAMVATALASGVAA). Asparagine 112, asparagine 138, asparagine 158, asparagine 197, asparagine 226, asparagine 291, and asparagine 374 each carry an N-linked (GlcNAc...) asparagine glycan.

The protein belongs to the Mj S-layer protein family.

It localises to the secreted. It is found in the cell wall. The protein localises to the S-layer. Its function is as follows. S-layer protein. The S-layer is a paracrystalline mono-layered assembly of proteins which coat the surface of the cell. The polypeptide is S-layer protein (sla) (Methanocaldococcus jannaschii (strain ATCC 43067 / DSM 2661 / JAL-1 / JCM 10045 / NBRC 100440) (Methanococcus jannaschii)).